A 249-amino-acid chain; its full sequence is Cysteine desulfuration protein SufE (249 aa).

The Cysteine persulfide intermediate role is filled by C154.

The protein belongs to the SufE family. In terms of assembly, monomer. Interacts with SufS; interaction enhances cysteine desulfurase activity of SufS. Post-translationally, proteolytically cleaved.

It is found in the plastid. Its subcellular location is the apicoplast. The protein operates within cofactor biosynthesis; iron-sulfur cluster biosynthesis. In terms of biological role, participates in sulfur mobilization (SUF) pathway for iron-sulfur (Fe-S) cluster biogenesis. Enhances cysteine desulfurase activity of SufS. Probably functions as a sulfur acceptor for SufS. The protein is Cysteine desulfuration protein SufE of Plasmodium falciparum (isolate 3D7).